Here is a 240-residue protein sequence, read N- to C-terminus: UDP-2,3-diacylglucosamine hydrolase (240 aa).

The Mn(2+) site is built by Asp-8, His-10, Asp-41, Asn-79, and His-114. A substrate-binding site is contributed by 79–80; the sequence is NR. Substrate contacts are provided by Asp-122, Ser-160, Asn-164, Lys-167, and His-195. Residues His-195 and His-197 each coordinate Mn(2+).

It belongs to the LpxH family. Mn(2+) serves as cofactor.

It is found in the cell inner membrane. The catalysed reaction is UDP-2-N,3-O-bis[(3R)-3-hydroxytetradecanoyl]-alpha-D-glucosamine + H2O = 2-N,3-O-bis[(3R)-3-hydroxytetradecanoyl]-alpha-D-glucosaminyl 1-phosphate + UMP + 2 H(+). Its pathway is glycolipid biosynthesis; lipid IV(A) biosynthesis; lipid IV(A) from (3R)-3-hydroxytetradecanoyl-[acyl-carrier-protein] and UDP-N-acetyl-alpha-D-glucosamine: step 4/6. Its function is as follows. Hydrolyzes the pyrophosphate bond of UDP-2,3-diacylglucosamine to yield 2,3-diacylglucosamine 1-phosphate (lipid X) and UMP by catalyzing the attack of water at the alpha-P atom. Involved in the biosynthesis of lipid A, a phosphorylated glycolipid that anchors the lipopolysaccharide to the outer membrane of the cell. The chain is UDP-2,3-diacylglucosamine hydrolase from Photorhabdus laumondii subsp. laumondii (strain DSM 15139 / CIP 105565 / TT01) (Photorhabdus luminescens subsp. laumondii).